The chain runs to 374 residues: WAT1-related protein At2g39510 (374 aa).

10 helical membrane passes run 9–29, 38–58, 64–84, 99–119, 135–155, 182–202, 212–232, 249–269, 284–304, and 306–326; these read FITV…AKFA, VLAS…AYFL, PKMT…EPTI, TFTA…AWIF, ILGT…KGPL, GASL…LQAI, SLTA…ALFI, LAAV…QGVI, LSMV…MFLG, and ILGA…KSKD. 2 EamA domains span residues 19-147 and 191-320; these read YAGL…GAML and ICWA…YSVL. Residues 350 to 374 are disordered; sequence SKANAKMDTNDASVVISRPNTNESV.

Belongs to the drug/metabolite transporter (DMT) superfamily. Plant drug/metabolite exporter (P-DME) (TC 2.A.7.4) family.

It localises to the membrane. The protein is WAT1-related protein At2g39510 of Arabidopsis thaliana (Mouse-ear cress).